Reading from the N-terminus, the 199-residue chain is MSRYVGPVFKRSRRFGFSILETGKEFVKGKQRQYAPGQHGQRRGKLSDFGIHQLEKQKVRFMYGINERQFRNTFAIANKAKGVTGTAFLQLLESRLDNIVYRMGFAQTRRQARQLVNHGHFLLNGKKADIPSQRINVGDTIELRAKSQNVPTILASIETRVVAPWIEKDKFKGKLIRVPERKELNQEINEALIVEFYNK.

One can recognise an S4 RNA-binding domain in the interval 94–157 (SRLDNIVYRM…QNVPTILASI (64 aa)).

Belongs to the universal ribosomal protein uS4 family. In terms of assembly, part of the 30S ribosomal subunit. Contacts protein S5. The interaction surface between S4 and S5 is involved in control of translational fidelity.

One of the primary rRNA binding proteins, it binds directly to 16S rRNA where it nucleates assembly of the body of the 30S subunit. Its function is as follows. With S5 and S12 plays an important role in translational accuracy. This is Small ribosomal subunit protein uS4 from Mycoplasma mobile (strain ATCC 43663 / 163K / NCTC 11711) (Mesomycoplasma mobile).